The following is a 147-amino-acid chain: MTIKLHHLRPAPGAKSDKIRVGRGEGGKRGKTAGRGTKGTKARKNVPAAFEGGQMPLHMRLPKLKGFTNPFRTEYQVVNVGDIARLFPEGGQVTVEDLVAKGAVRKNQLVKVLGDGDLTVAVQVTVDKFTGSAKEKIAAAGGTATEL.

The interval Met1 to Asn45 is disordered. Over residues Lys15–Lys28 the composition is skewed to basic and acidic residues.

The protein belongs to the universal ribosomal protein uL15 family. Part of the 50S ribosomal subunit.

Its function is as follows. Binds to the 23S rRNA. This Rhodococcus jostii (strain RHA1) protein is Large ribosomal subunit protein uL15.